The primary structure comprises 120 residues: MLKFTAEHEWLKFEGDIATVGITSHAAEQLGDLVFVELPEVGATFAKDGDAATVESVKAASDVYCPLDGEVVEINQAIVDDPSLVNSDPQGAGWFFKLKLSNAADAETLLDEAAYKELIA.

Positions 17–99 (IATVGITSHA…QGAGWFFKLK (83 aa)) constitute a Lipoyl-binding domain. Lys-58 bears the N6-lipoyllysine mark.

It belongs to the GcvH family. As to quaternary structure, the glycine cleavage system is composed of four proteins: P, T, L and H. (R)-lipoate serves as cofactor.

Functionally, the glycine cleavage system catalyzes the degradation of glycine. The H protein shuttles the methylamine group of glycine from the P protein to the T protein. This chain is Glycine cleavage system H protein, found in Agrobacterium fabrum (strain C58 / ATCC 33970) (Agrobacterium tumefaciens (strain C58)).